We begin with the raw amino-acid sequence, 514 residues long: Maturase K (514 aa).

Belongs to the intron maturase 2 family. MatK subfamily.

It is found in the plastid. It localises to the chloroplast. Functionally, usually encoded in the trnK tRNA gene intron. Probably assists in splicing its own and other chloroplast group II introns. The protein is Maturase K of Zamia integrifolia (Coontie).